Reading from the N-terminus, the 281-residue chain is ATP synthase gamma chain (281 aa).

Belongs to the ATPase gamma chain family. F-type ATPases have 2 components, CF(1) - the catalytic core - and CF(0) - the membrane proton channel. CF(1) has five subunits: alpha(3), beta(3), gamma(1), delta(1), epsilon(1). CF(0) has three main subunits: a, b and c.

It is found in the cell inner membrane. Produces ATP from ADP in the presence of a proton gradient across the membrane. The gamma chain is believed to be important in regulating ATPase activity and the flow of protons through the CF(0) complex. The protein is ATP synthase gamma chain of Ehrlichia chaffeensis (strain ATCC CRL-10679 / Arkansas).